The sequence spans 206 residues: Ras-related protein RABG3d (206 aa).

GTP is bound at residue 15-22 (GDSGVGKT). The Effector region motif lies at 37–45 (YKATIGADF). Residues 63–67 (DTAGQ), 125–128 (NKTD), and 158–159 (SA) contribute to the GTP site. 2 S-geranylgeranyl cysteine lipidation sites follow: Cys204 and Cys206. Cys206 bears the Cysteine methyl ester mark.

This sequence belongs to the small GTPase superfamily. Rab family.

The protein localises to the cell membrane. Its function is as follows. Intracellular vesicle trafficking and protein transport. In Arabidopsis thaliana (Mouse-ear cress), this protein is Ras-related protein RABG3d (RABG3D).